Consider the following 422-residue polypeptide: MSNLEQAERIKNLTKDHHNWMKNSLNLIASENITSRAVREAVASDLSHRYAEGLPGERLYEGCDYIDAIEEETIALSKKLYDAEHVNVQPTSGVVANLASFFALTKPGDLLMSINVPEGGHISHASVSAAGIRGLKISSVPMDDSIMNVDIDKTLSKIREKEPKAIVLGGSLFLFPQPVSEVADVAKEVGAKIIYDAAHVLGLIAGKRFQDPVKEGADIVTGSTHKTFPGPQGGIILCKEEIGRKVDNCVFPGVVSNHHLHHMAALGVATAEMLEFGKDYANQTISNAKALAQALYERGFNVLCEDQGFTESHQVAMDVAKLGDVSKMAKTLQYNNIILNKNLLPWDDVNDSDNPSGIRMGTQELTHRGFKEDEMDQVAEFIKQVVMDKKDVKEDVTEFMQDYTTVHYAFDEGCEGYDYIEF.

120 to 122 (GHI) contacts (6S)-5,6,7,8-tetrahydrofolate. K226 is modified (N6-(pyridoxal phosphate)lysine). E241 is a (6S)-5,6,7,8-tetrahydrofolate binding site.

The protein belongs to the SHMT family. Homodimer. Pyridoxal 5'-phosphate is required as a cofactor.

It localises to the cytoplasm. It carries out the reaction 5,10-methylenetetrahydromethanopterin + glycine + H2O = 5,6,7,8-tetrahydromethanopterin + L-serine. Its pathway is amino-acid biosynthesis; glycine biosynthesis; glycine from L-serine: step 1/1. Functionally, catalyzes the reversible interconversion of serine and glycine with tetrahydromethanopterin (H4MPT) serving as the one-carbon carrier. Also exhibits a pteridine-independent aldolase activity toward beta-hydroxyamino acids, producing glycine and aldehydes, via a retro-aldol mechanism. This Methanosphaera stadtmanae (strain ATCC 43021 / DSM 3091 / JCM 11832 / MCB-3) protein is Serine hydroxymethyltransferase.